Consider the following 162-residue polypeptide: 2-C-methyl-D-erythritol 2,4-cyclodiphosphate synthase (162 aa).

Residues aspartate 9 and histidine 11 each contribute to the a divalent metal cation site. 4-CDP-2-C-methyl-D-erythritol 2-phosphate-binding positions include 9 to 11 (DVH) and 35 to 36 (HS). A divalent metal cation is bound at residue histidine 43. 4-CDP-2-C-methyl-D-erythritol 2-phosphate contacts are provided by residues 57–59 (DIG), 62–66 (FPDTD), 133–136 (TTTE), phenylalanine 140, and arginine 143.

It belongs to the IspF family. In terms of assembly, homotrimer. A divalent metal cation serves as cofactor.

It catalyses the reaction 4-CDP-2-C-methyl-D-erythritol 2-phosphate = 2-C-methyl-D-erythritol 2,4-cyclic diphosphate + CMP. It functions in the pathway isoprenoid biosynthesis; isopentenyl diphosphate biosynthesis via DXP pathway; isopentenyl diphosphate from 1-deoxy-D-xylulose 5-phosphate: step 4/6. Involved in the biosynthesis of isopentenyl diphosphate (IPP) and dimethylallyl diphosphate (DMAPP), two major building blocks of isoprenoid compounds. Catalyzes the conversion of 4-diphosphocytidyl-2-C-methyl-D-erythritol 2-phosphate (CDP-ME2P) to 2-C-methyl-D-erythritol 2,4-cyclodiphosphate (ME-CPP) with a corresponding release of cytidine 5-monophosphate (CMP). The sequence is that of 2-C-methyl-D-erythritol 2,4-cyclodiphosphate synthase from Histophilus somni (strain 2336) (Haemophilus somnus).